We begin with the raw amino-acid sequence, 143 residues long: Nucleoside diphosphate kinase (143 aa).

ATP-binding residues include Lys-11, Phe-59, Arg-87, Thr-93, Arg-104, and Asn-114. His-117 functions as the Pros-phosphohistidine intermediate in the catalytic mechanism.

This sequence belongs to the NDK family. Homotetramer. Requires Mg(2+) as cofactor.

It is found in the cytoplasm. The enzyme catalyses a 2'-deoxyribonucleoside 5'-diphosphate + ATP = a 2'-deoxyribonucleoside 5'-triphosphate + ADP. It catalyses the reaction a ribonucleoside 5'-diphosphate + ATP = a ribonucleoside 5'-triphosphate + ADP. In terms of biological role, major role in the synthesis of nucleoside triphosphates other than ATP. The ATP gamma phosphate is transferred to the NDP beta phosphate via a ping-pong mechanism, using a phosphorylated active-site intermediate. This chain is Nucleoside diphosphate kinase, found in Shigella boydii serotype 4 (strain Sb227).